Here is a 139-residue protein sequence, read N- to C-terminus: 6,7-dimethyl-8-ribityllumazine synthase (139 aa).

5-amino-6-(D-ribitylamino)uracil is bound by residues F13, 45-47, and 69-71; these read VFD and AVI. 74 to 75 provides a ligand contact to (2S)-2-hydroxy-3-oxobutyl phosphate; the sequence is AT. H77 serves as the catalytic Proton donor. Residue L102 coordinates 5-amino-6-(D-ribitylamino)uracil. Residue R117 participates in (2S)-2-hydroxy-3-oxobutyl phosphate binding.

This sequence belongs to the DMRL synthase family.

It carries out the reaction (2S)-2-hydroxy-3-oxobutyl phosphate + 5-amino-6-(D-ribitylamino)uracil = 6,7-dimethyl-8-(1-D-ribityl)lumazine + phosphate + 2 H2O + H(+). Its pathway is cofactor biosynthesis; riboflavin biosynthesis; riboflavin from 2-hydroxy-3-oxobutyl phosphate and 5-amino-6-(D-ribitylamino)uracil: step 1/2. Functionally, catalyzes the formation of 6,7-dimethyl-8-ribityllumazine by condensation of 5-amino-6-(D-ribitylamino)uracil with 3,4-dihydroxy-2-butanone 4-phosphate. This is the penultimate step in the biosynthesis of riboflavin. This is 6,7-dimethyl-8-ribityllumazine synthase from Methanothermobacter thermautotrophicus (strain ATCC 29096 / DSM 1053 / JCM 10044 / NBRC 100330 / Delta H) (Methanobacterium thermoautotrophicum).